A 199-amino-acid polypeptide reads, in one-letter code: Interleukin-11 (199 aa).

An N-terminal signal peptide occupies residues 1 to 21; it reads MNCVCRLVLVVLSLWPDTAVA. Residues 182-190 form an important for interaction with IL11RA and for the stimulation of cell proliferation region; it reads HLTLDWAVR.

The protein belongs to the IL-6 superfamily. As to quaternary structure, interacts with IL11RA to associate with IL6ST, giving rise to a multimeric signaling complex.

It localises to the secreted. Functionally, cytokine that stimulates the proliferation of hematopoietic stem cells and megakaryocyte progenitor cells and induces megakaryocyte maturation resulting in increased platelet production. Also promotes the proliferation of hepatocytes in response to liver damage. Binding to its receptor formed by IL6ST and IL11RA activates a signaling cascade that promotes cell proliferation. Signaling leads to the activation of intracellular protein kinases and the phosphorylation of STAT3. The interaction with the membrane-bound IL11RA and IL6ST stimulates 'classic signaling', whereas the binding of IL11 and soluble IL11RA to IL6ST stimulates 'trans-signaling'. The chain is Interleukin-11 (IL11) from Macaca fascicularis (Crab-eating macaque).